Consider the following 738-residue polypeptide: Ethylene receptor (738 aa).

A run of 3 helical transmembrane segments spans residues 23–43, 54–74, and 92–112; these read ISDF…IYFV, VLVQ…INLW, and VLTA…IPDL. Residues Cys65 and His69 each coordinate Cu cation. Residues 158-307 enclose the GAF domain; that stretch reads DRHTILKTTL…VVADQVAVAL (150 aa). The Histidine kinase domain occupies 350–589; that stretch reads VMNHEMRTPM…IFIVKLGFAE (240 aa). Phosphohistidine; by autocatalysis is present on His353. The Response regulatory domain occupies 612–729; the sequence is PGLKVLVMDD…KMRSVLSELL (118 aa). Residue Asp660 is modified to 4-aspartylphosphate.

Belongs to the ethylene receptor family. In terms of assembly, homodimer; disulfide-linked. Requires Cu cation as cofactor. Activation probably requires a transfer of a phosphate group between a His in the transmitter domain and an Asp of the receiver domain.

It localises to the endoplasmic reticulum membrane. The catalysed reaction is ATP + protein L-histidine = ADP + protein N-phospho-L-histidine.. Its function is as follows. May act early in the ethylene signal transduction pathway, possibly as an ethylene receptor, or as a regulator of the pathway. The chain is Ethylene receptor (ETR1) from Prunus persica (Peach).